We begin with the raw amino-acid sequence, 464 residues long: L-2-hydroxyglutarate dehydrogenase, mitochondrial (464 aa).

The N-terminal 52 residues, 1–52 (MWPTLRYVGGVCGLARYCVAGGFLRASGPASGVPGLLCGGGRRSSSTSSFDI), are a transit peptide targeting the mitochondrion. 2 positions are modified to N6-acetyllysine: Lys105 and Lys174.

It belongs to the L2HGDH family. Requires FAD as cofactor.

It is found in the mitochondrion. The catalysed reaction is (S)-2-hydroxyglutarate + A = 2-oxoglutarate + AH2. The polypeptide is L-2-hydroxyglutarate dehydrogenase, mitochondrial (L2hgdh) (Mus musculus (Mouse)).